A 118-amino-acid polypeptide reads, in one-letter code: NLIQFGNMIQCANKGSRPTRHYMDYGCYCGWGGSGTPVDELDRCCKVHDDCYGEAEKKGCYPKLTLYSWDCTGNVPICSPKAECKDFVCACDAEAAKCFAKATYNDANWNIDTKTRCK.

7 disulfides stabilise this stretch: Cys-11/Cys-71, Cys-27/Cys-117, Cys-29/Cys-45, Cys-44/Cys-98, Cys-51/Cys-91, Cys-60/Cys-84, and Cys-78/Cys-89. Ca(2+) contacts are provided by Tyr-28, Gly-30, and Gly-32. Residue His-48 is part of the active site. Asp-49 serves as a coordination point for Ca(2+). Asp-92 is an active-site residue.

This sequence belongs to the phospholipase A2 family. Group I subfamily. D49 sub-subfamily. It depends on Ca(2+) as a cofactor. In terms of tissue distribution, expressed by the venom gland.

The protein resides in the secreted. It carries out the reaction a 1,2-diacyl-sn-glycero-3-phosphocholine + H2O = a 1-acyl-sn-glycero-3-phosphocholine + a fatty acid + H(+). In terms of biological role, PLA2 catalyzes the calcium-dependent hydrolysis of the 2-acyl groups in 3-sn-phosphoglycerides. This is Acidic phospholipase A2 PA-3 from Pseudechis australis (Mulga snake).